A 542-amino-acid chain; its full sequence is Homeobox and leucine zipper protein Homez (542 aa).

A DNA-binding region (homeobox 1) is located at residues Trp55–Trp114. A disordered region spans residues Leu165–Leu193. Residues Lys181 and Lys201 each participate in a glycyl lysine isopeptide (Lys-Gly) (interchain with G-Cter in SUMO2) cross-link. The disordered stretch occupies residues Val250–Ser307. Low complexity predominate over residues Pro272–Ser285. Positions Phe286–Thr296 are enriched in polar residues. The residue at position 345 (Ser345) is a Phosphoserine. DNA-binding regions (homeobox) lie at residues Gln349–Gln409 and Thr443–Val502. The Nuclear localization signal motif lies at Arg352–Lys357. 2 disordered regions span residues Phe424 to Asp454 and Val501 to Asp542. Position 443 is a phosphothreonine (Thr443). Residues Pro444–Asp454 show a composition bias toward pro residues. Over residues Leu505 to Asp542 the composition is skewed to acidic residues.

As to quaternary structure, homodimer or heterodimer (Potential). Interacts with HOXC8. Ubiquitous. Strongly expressed in testis.

It localises to the nucleus. Its function is as follows. May function as a transcriptional regulator. This is Homeobox and leucine zipper protein Homez (Homez) from Mus musculus (Mouse).